Reading from the N-terminus, the 209-residue chain is Peptide methionine sulfoxide reductase MsrA (209 aa).

The active site involves C14. The disordered stretch occupies residues 183 to 209; it reads FSALTTGGNQPGARGGLTNNTCQHPRH. Positions 199 to 209 are enriched in polar residues; that stretch reads LTNNTCQHPRH.

Belongs to the MsrA Met sulfoxide reductase family.

The enzyme catalyses L-methionyl-[protein] + [thioredoxin]-disulfide + H2O = L-methionyl-(S)-S-oxide-[protein] + [thioredoxin]-dithiol. It carries out the reaction [thioredoxin]-disulfide + L-methionine + H2O = L-methionine (S)-S-oxide + [thioredoxin]-dithiol. Its function is as follows. Has an important function as a repair enzyme for proteins that have been inactivated by oxidation. Catalyzes the reversible oxidation-reduction of methionine sulfoxide in proteins to methionine. In Pseudomonas fluorescens, this protein is Peptide methionine sulfoxide reductase MsrA.